The primary structure comprises 436 residues: Kynureninase (436 aa).

Pyridoxal 5'-phosphate-binding positions include L88, T89, 116 to 119, D202, H205, and Y227; that span reads FPSD. An N6-(pyridoxal phosphate)lysine modification is found at K228. Pyridoxal 5'-phosphate-binding residues include W280 and N308.

It belongs to the kynureninase family. As to quaternary structure, homodimer. Requires pyridoxal 5'-phosphate as cofactor.

The protein localises to the cytoplasm. The catalysed reaction is L-kynurenine + H2O = anthranilate + L-alanine + H(+). It catalyses the reaction 3-hydroxy-L-kynurenine + H2O = 3-hydroxyanthranilate + L-alanine + H(+). It participates in amino-acid degradation; L-kynurenine degradation; L-alanine and anthranilate from L-kynurenine: step 1/1. Its pathway is cofactor biosynthesis; NAD(+) biosynthesis; quinolinate from L-kynurenine: step 2/3. Its function is as follows. Catalyzes the cleavage of L-kynurenine (L-Kyn) and L-3-hydroxykynurenine (L-3OHKyn) into anthranilic acid (AA) and 3-hydroxyanthranilic acid (3-OHAA), respectively. The chain is Kynureninase from Schistosoma japonicum (Blood fluke).